Reading from the N-terminus, the 158-residue chain is Small ribosomal subunit protein uS7 (158 aa).

This sequence belongs to the universal ribosomal protein uS7 family. In terms of assembly, part of the 30S ribosomal subunit. Contacts proteins S9 and S11.

Its function is as follows. One of the primary rRNA binding proteins, it binds directly to 16S rRNA where it nucleates assembly of the head domain of the 30S subunit. Is located at the subunit interface close to the decoding center, probably blocks exit of the E-site tRNA. In Wolbachia pipientis subsp. Culex pipiens (strain wPip), this protein is Small ribosomal subunit protein uS7.